The primary structure comprises 158 residues: NAD(P)H-quinone oxidoreductase subunit J, chloroplastic (158 aa).

Belongs to the complex I 30 kDa subunit family. As to quaternary structure, NDH is composed of at least 16 different subunits, 5 of which are encoded in the nucleus.

It localises to the plastid. The protein localises to the chloroplast thylakoid membrane. It catalyses the reaction a plastoquinone + NADH + (n+1) H(+)(in) = a plastoquinol + NAD(+) + n H(+)(out). It carries out the reaction a plastoquinone + NADPH + (n+1) H(+)(in) = a plastoquinol + NADP(+) + n H(+)(out). Its function is as follows. NDH shuttles electrons from NAD(P)H:plastoquinone, via FMN and iron-sulfur (Fe-S) centers, to quinones in the photosynthetic chain and possibly in a chloroplast respiratory chain. The immediate electron acceptor for the enzyme in this species is believed to be plastoquinone. Couples the redox reaction to proton translocation, and thus conserves the redox energy in a proton gradient. The polypeptide is NAD(P)H-quinone oxidoreductase subunit J, chloroplastic (Guizotia abyssinica (Niger)).